The sequence spans 399 residues: Maltose excess protein 1-like, chloroplastic (399 aa).

The transit peptide at 1–67 (MSSSVSSVRL…RRRRYALPPV (67 aa)) directs the protein to the chloroplast. A run of 9 helical transmembrane segments spans residues 93–113 (FAGA…ILNA), 123–143 (ALFA…LSLL), 154–174 (AVIV…QLAM), 180–202 (LPQF…LNYF), 217–237 (ITIG…VPFI), 238–258 (PNSL…VVMA), 268–288 (INFV…WMPV), 306–326 (AFTM…AVFI), and 361–381 (FLAT…RDTI).

The protein localises to the plastid. It localises to the chloroplast inner membrane. In terms of biological role, probable maltose transporter. Essential for the conversion of starch to sucrose in leaves at night, probably via the export of maltose from the chloroplast. The polypeptide is Maltose excess protein 1-like, chloroplastic (Oryza sativa subsp. japonica (Rice)).